A 352-amino-acid polypeptide reads, in one-letter code: tRNA-specific 2-thiouridylase MnmA (352 aa).

ATP is bound by residues 11 to 18 and M37; that span reads AMSGGVDS. The Nucleophile role is filled by C101. C101 and C197 form a disulfide bridge. An ATP-binding site is contributed by G125. The segment at 147–149 is interaction with tRNA; it reads KDQ. C197 serves as the catalytic Cysteine persulfide intermediate. The interaction with tRNA stretch occupies residues 302–303; the sequence is RY.

The protein belongs to the MnmA/TRMU family.

It localises to the cytoplasm. It catalyses the reaction S-sulfanyl-L-cysteinyl-[protein] + uridine(34) in tRNA + AH2 + ATP = 2-thiouridine(34) in tRNA + L-cysteinyl-[protein] + A + AMP + diphosphate + H(+). Catalyzes the 2-thiolation of uridine at the wobble position (U34) of tRNA, leading to the formation of s(2)U34. The protein is tRNA-specific 2-thiouridylase MnmA of Syntrophotalea carbinolica (strain DSM 2380 / NBRC 103641 / GraBd1) (Pelobacter carbinolicus).